The primary structure comprises 651 residues: Epithelial sodium channel subunit beta (651 aa).

At 1-50 the chain is on the cytoplasmic side; the sequence is MFLKRWFIRALHRLQKGPGYGYSELFVWYCNNTNTHGPKRLIIEGPKKKT. The helical transmembrane segment at 51–71 threads the bilayer; it reads LWSLFTVTFACLVFWQWGLLI. At 72–541 the chain is on the extracellular side; sequence QTYLSWGVSV…GGQFGFWMGG (470 aa). 8 disulfides stabilise this stretch: cysteine 98/cysteine 281, cysteine 205/cysteine 212, cysteine 258/cysteine 265, cysteine 370/cysteine 457, cysteine 395/cysteine 453, cysteine 399/cysteine 449, cysteine 408/cysteine 435, and cysteine 410/cysteine 424. The helical transmembrane segment at 542–562 threads the bilayer; it reads SVLCIIEFGEVFIDCIWIAVI. The Cytoplasmic segment spans residues 563 to 651; that stretch reads RFVKWYKNRK…TEHHSDSEDL (89 aa). Positions 612-651 are disordered; the sequence is QPPDLYLPTTLEIPGTPPPKYDSLRVHPIDTEHHSDSEDL. Residues 633-651 are compositionally biased toward basic and acidic residues; that stretch reads DSLRVHPIDTEHHSDSEDL.

This sequence belongs to the amiloride-sensitive sodium channel (TC 1.A.6) family. SCNN1B subfamily. As to quaternary structure, component of the heterotrimeric epithelial sodium channel (ENaC) composed of an alpha/SCNN1A, a beta/SCNN1B and a gamma/SCNN1G subunit. As to expression, strongly expressed in gill, kidney and rectum and more weakly in brain, eye, liver and muscle.

The protein localises to the apical cell membrane. It is found in the cytoplasmic vesicle membrane. It catalyses the reaction Na(+)(in) = Na(+)(out). Its activity is regulated as follows. Originally identified and characterized by its inhibition by the diuretic drug amiloride. In terms of biological role, this is one of the three pore-forming subunits of the heterotrimeric epithelial sodium channel (ENaC), a critical regulator of sodium balance and fluid homeostasis. ENaC operates in epithelial tissues, where it mediates the electrodiffusion of sodium ions from extracellular fluid through the apical membrane of cells, with water following osmotically. The polypeptide is Epithelial sodium channel subunit beta (Neoceratodus forsteri (Australian lungfish)).